A 30-amino-acid chain; its full sequence is Hemocyanin subunit 2 (30 aa).

It belongs to the tyrosinase family. Hemocyanin subfamily. In terms of tissue distribution, hemolymph.

The protein resides in the secreted. It is found in the extracellular space. Hemocyanins are copper-containing oxygen carriers occurring freely dissolved in the hemolymph of many mollusks and arthropods. The sequence is that of Hemocyanin subunit 2 from Homarus americanus (American lobster).